Reading from the N-terminus, the 359-residue chain is Phosphate acyltransferase (359 aa).

The segment at 337 to 359 is disordered; it reads AAGAAQPAPETEVPGAHPSPHVA.

It belongs to the PlsX family. Homodimer. Probably interacts with PlsY.

It localises to the cytoplasm. The catalysed reaction is a fatty acyl-[ACP] + phosphate = an acyl phosphate + holo-[ACP]. It participates in lipid metabolism; phospholipid metabolism. Its function is as follows. Catalyzes the reversible formation of acyl-phosphate (acyl-PO(4)) from acyl-[acyl-carrier-protein] (acyl-ACP). This enzyme utilizes acyl-ACP as fatty acyl donor, but not acyl-CoA. The polypeptide is Phosphate acyltransferase (Cupriavidus necator (strain ATCC 17699 / DSM 428 / KCTC 22496 / NCIMB 10442 / H16 / Stanier 337) (Ralstonia eutropha)).